A 62-amino-acid chain; its full sequence is uncharacterized protein (62 aa).

A disordered region spans residues 1–62 (MTSTQNLKDK…PPKKSLSQLP (62 aa)). Residues 7–29 (LKDKFEEEIRQQKEGKGKKEKVW) show a composition bias toward basic and acidic residues. Residues 32 to 43 (HSDSSYNKQTAV) show a composition bias toward polar residues.

This is an uncharacterized protein from Dictyostelium discoideum (Social amoeba).